Here is a 516-residue protein sequence, read N- to C-terminus: Replication factor C large subunit (516 aa).

ATP is bound at residue 44 to 51 (GAPGVGKT). The tract at residues 421–516 (RSEAVEAHAG…DGQAGLSEFM (96 aa)) is disordered. Residues 454–467 (VQSHKSAESGDDTV) show a composition bias toward basic and acidic residues. Residues 479-496 (QSGASETASATESASDSD) show a composition bias toward low complexity. The segment covering 497-508 (ASTDTDADDDDG) has biased composition (acidic residues).

Belongs to the activator 1 small subunits family. RfcL subfamily. As to quaternary structure, heteromultimer composed of small subunits (RfcS) and large subunits (RfcL).

In terms of biological role, part of the RFC clamp loader complex which loads the PCNA sliding clamp onto DNA. In Haloquadratum walsbyi (strain DSM 16790 / HBSQ001), this protein is Replication factor C large subunit.